The sequence spans 190 residues: Threonylcarbamoyl-AMP synthase (190 aa).

A YrdC-like domain is found at 7–190; that stretch reads RAALSDVLQA…ALTGKQFRQG (184 aa).

It belongs to the SUA5 family. TsaC subfamily.

It localises to the cytoplasm. The enzyme catalyses L-threonine + hydrogencarbonate + ATP = L-threonylcarbamoyladenylate + diphosphate + H2O. In terms of biological role, required for the formation of a threonylcarbamoyl group on adenosine at position 37 (t(6)A37) in tRNAs that read codons beginning with adenine. Catalyzes the conversion of L-threonine, HCO(3)(-)/CO(2) and ATP to give threonylcarbamoyl-AMP (TC-AMP) as the acyladenylate intermediate, with the release of diphosphate. This Yersinia enterocolitica serotype O:8 / biotype 1B (strain NCTC 13174 / 8081) protein is Threonylcarbamoyl-AMP synthase.